The primary structure comprises 158 residues: Protein SREK1IP1 (158 aa).

Disordered regions lie at residues 1–20 (MAAP…RCGY) and 45–158 (SSTS…SDTD). Residues 13 to 30 (AGCKRCGYPGHLTFECRN) form a CCHC-type zinc finger. Basic and acidic residues predominate over residues 59–79 (ALSKEKIFGSHSKGSQEDSRK). Composition is skewed to basic residues over residues 80–98 (EKHK…KKRS) and 111–140 (KKKK…KQKK). The segment covering 145–158 (SSSSDSSSESSDTD) has biased composition (low complexity).

Its function is as follows. Possible splicing regulator involved in the control of cellular survival. The protein is Protein SREK1IP1 (srek1ip1) of Danio rerio (Zebrafish).